Here is a 644-residue protein sequence, read N- to C-terminus: Exoribonuclease 2 (644 aa).

One can recognise an RNB domain in the interval 189-516; the sequence is REDLTALNFV…NHRLLKAVIT (328 aa). The S1 motif domain occupies 561-643; sequence DIRFNAEIID…ETRGIVAKPA (83 aa).

The protein belongs to the RNR ribonuclease family. RNase II subfamily.

It localises to the cytoplasm. It catalyses the reaction Exonucleolytic cleavage in the 3'- to 5'-direction to yield nucleoside 5'-phosphates.. In terms of biological role, involved in mRNA degradation. Hydrolyzes single-stranded polyribonucleotides processively in the 3' to 5' direction. The sequence is that of Exoribonuclease 2 from Pectobacterium atrosepticum (strain SCRI 1043 / ATCC BAA-672) (Erwinia carotovora subsp. atroseptica).